A 35-amino-acid chain; its full sequence is Putative gastric cancer-related gene 224 protein (35 aa).

Expressed in gastric mucosa.

This is Putative gastric cancer-related gene 224 protein (GCRG224) from Homo sapiens (Human).